The following is a 114-amino-acid chain: Protein U68 (114 aa).

The protein belongs to the herpesviridae UL96 family.

The polypeptide is Protein U68 (U68) (Homo sapiens (Human)).